A 194-amino-acid polypeptide reads, in one-letter code: Oligoribonuclease (194 aa).

Residues 11–174 (LIWIDLEMTG…SDVRDSIDEL (164 aa)) enclose the Exonuclease domain. The active site involves tyrosine 132.

The protein belongs to the oligoribonuclease family.

The protein localises to the cytoplasm. 3'-to-5' exoribonuclease specific for small oligoribonucleotides. This chain is Oligoribonuclease, found in Xanthomonas campestris pv. campestris (strain ATCC 33913 / DSM 3586 / NCPPB 528 / LMG 568 / P 25).